Consider the following 444-residue polypeptide: Trigger factor (444 aa).

In terms of domain architecture, PPIase FKBP-type spans 163 to 248 (GDFLTVDFVG…AKALKKAVAP (86 aa)).

Belongs to the FKBP-type PPIase family. Tig subfamily.

The protein localises to the cytoplasm. The enzyme catalyses [protein]-peptidylproline (omega=180) = [protein]-peptidylproline (omega=0). In terms of biological role, involved in protein export. Acts as a chaperone by maintaining the newly synthesized protein in an open conformation. Functions as a peptidyl-prolyl cis-trans isomerase. This Granulibacter bethesdensis (strain ATCC BAA-1260 / CGDNIH1) protein is Trigger factor.